Reading from the N-terminus, the 284-residue chain is Phosphatidylserine decarboxylase proenzyme (284 aa).

Residues aspartate 88, histidine 145, and serine 248 each act as charge relay system; for autoendoproteolytic cleavage activity in the active site. The active-site Schiff-base intermediate with substrate; via pyruvic acid; for decarboxylase activity is the serine 248. Position 248 is a pyruvic acid (Ser); by autocatalysis (serine 248).

This sequence belongs to the phosphatidylserine decarboxylase family. PSD-B subfamily. Prokaryotic type I sub-subfamily. In terms of assembly, heterodimer of a large membrane-associated beta subunit and a small pyruvoyl-containing alpha subunit. Pyruvate is required as a cofactor. Is synthesized initially as an inactive proenzyme. Formation of the active enzyme involves a self-maturation process in which the active site pyruvoyl group is generated from an internal serine residue via an autocatalytic post-translational modification. Two non-identical subunits are generated from the proenzyme in this reaction, and the pyruvate is formed at the N-terminus of the alpha chain, which is derived from the carboxyl end of the proenzyme. The autoendoproteolytic cleavage occurs by a canonical serine protease mechanism, in which the side chain hydroxyl group of the serine supplies its oxygen atom to form the C-terminus of the beta chain, while the remainder of the serine residue undergoes an oxidative deamination to produce ammonia and the pyruvoyl prosthetic group on the alpha chain. During this reaction, the Ser that is part of the protease active site of the proenzyme becomes the pyruvoyl prosthetic group, which constitutes an essential element of the active site of the mature decarboxylase.

It localises to the cell membrane. The enzyme catalyses a 1,2-diacyl-sn-glycero-3-phospho-L-serine + H(+) = a 1,2-diacyl-sn-glycero-3-phosphoethanolamine + CO2. The protein operates within phospholipid metabolism; phosphatidylethanolamine biosynthesis; phosphatidylethanolamine from CDP-diacylglycerol: step 2/2. Catalyzes the formation of phosphatidylethanolamine (PtdEtn) from phosphatidylserine (PtdSer). This chain is Phosphatidylserine decarboxylase proenzyme, found in Albidiferax ferrireducens (strain ATCC BAA-621 / DSM 15236 / T118) (Rhodoferax ferrireducens).